The following is a 513-amino-acid chain: MSDTTLEKIIVLDYGSQYNQLIARRIREIGVFSELMSHKVTAKEIREINPIGIILSGGPNSVYDEGSFDIDPEIFELGLPVLGICYGMQLLSYKLGGMVEAAGEREYGVAPLQLTGKSALFAGTPEVQDVLMSHGDRVTAIPEGFHVVGTSPNSPFAAVENTERNLYGIQFHPEVRHSVHGTEMLRNFALNICGAKGNWSMENFIDMQIKNIREKVGDKKVLLGLSGGVDSSVVGVLLQRAIGDQLTSIFVDHGFLRKGEADQVMETLGGKFGLNIIKVDAQKRFMDKLVGLSDPETKRKIIGNEFVYVFDDEANKLEGVDFLAQGTLYTDVIESGTDTAQTIKSHHNVGGLPEDMQFQLIEPLNTLFKDEVRALGTQLGMPDEIVWRQPFPGPGLAIRVLGDLTEEKLETVRESDAILREEIAAAGLERDVWQYFTVNTDVKSVGVMGDQRTYDYTLAIRAITSIDGMTADFAQLPWDLLQKISKRIVNEVDHVNRIVYDITSKPPATVEWQ.

The 191-residue stretch at 8–198 (KIIVLDYGSQ…ALNICGAKGN (191 aa)) folds into the Glutamine amidotransferase type-1 domain. The Nucleophile role is filled by Cys85. Catalysis depends on residues His172 and Glu174. The region spanning 199–388 (WSMENFIDMQ…LGMPDEIVWR (190 aa)) is the GMPS ATP-PPase domain. 226–232 (SGGVDSS) provides a ligand contact to ATP.

Homodimer.

The enzyme catalyses XMP + L-glutamine + ATP + H2O = GMP + L-glutamate + AMP + diphosphate + 2 H(+). The protein operates within purine metabolism; GMP biosynthesis; GMP from XMP (L-Gln route): step 1/1. Its function is as follows. Catalyzes the synthesis of GMP from XMP. This is GMP synthase [glutamine-hydrolyzing] (guaA) from Lactococcus lactis subsp. lactis (strain IL1403) (Streptococcus lactis).